The chain runs to 121 residues: KTFTRCELVQALRRQGFDEAKLRDWVCLVENESRGRTDIVGKPNKNGSRDYGLFQINDKYWCSNTSKAGKDCNITCSQLLTDDITVASKCAKKVYKRHNFMAWYGWRNHCQNKPLPDISKC.

The C-type lysozyme domain occupies 1–121; it reads KTFTRCELVQ…NKPLPDISKC (121 aa). Cystine bridges form between C6–C121, C27–C110, C62–C76, and C72–C90. Active-site residues include E32 and D50.

The protein belongs to the glycosyl hydrolase 22 family.

The enzyme catalyses Hydrolysis of (1-&gt;4)-beta-linkages between N-acetylmuramic acid and N-acetyl-D-glucosamine residues in a peptidoglycan and between N-acetyl-D-glucosamine residues in chitodextrins.. Lysozymes have primarily a bacteriolytic function; those in tissues and body fluids are associated with the monocyte-macrophage system and enhance the activity of immunoagents. In Galleria mellonella (Greater wax moth), this protein is Lysozyme.